A 491-amino-acid chain; its full sequence is Probable cytosol aminopeptidase (491 aa).

Residues Lys260 and Asp265 each contribute to the Mn(2+) site. Lys272 is a catalytic residue. Residues Asp284, Asp343, and Glu345 each coordinate Mn(2+). Arg347 is a catalytic residue.

This sequence belongs to the peptidase M17 family. The cofactor is Mn(2+).

It is found in the cytoplasm. The catalysed reaction is Release of an N-terminal amino acid, Xaa-|-Yaa-, in which Xaa is preferably Leu, but may be other amino acids including Pro although not Arg or Lys, and Yaa may be Pro. Amino acid amides and methyl esters are also readily hydrolyzed, but rates on arylamides are exceedingly low.. The enzyme catalyses Release of an N-terminal amino acid, preferentially leucine, but not glutamic or aspartic acids.. Functionally, presumably involved in the processing and regular turnover of intracellular proteins. Catalyzes the removal of unsubstituted N-terminal amino acids from various peptides. The sequence is that of Probable cytosol aminopeptidase from Trichormus variabilis (strain ATCC 29413 / PCC 7937) (Anabaena variabilis).